We begin with the raw amino-acid sequence, 593 residues long: Immunoglobulin G-binding protein G (593 aa).

The first 33 residues, 1 to 33, serve as a signal peptide directing secretion; the sequence is MEKEKKVKYFLRKSAFGLASVSAAFLVGSTVFA. 5 repeat units span residues 104–140, 179–215, 254–290, 303–357, and 373–427. The interval 104–290 is 3 X 37 AA repeats; that stretch reads LAKAKADALK…AKTVEGVKAL (187 aa). The tract at residues 303–427 is 2 X 55 AA repeats; that stretch reads TYKLILNGKT…DATKTFTVTE (125 aa). The tract at residues 503–567 is disordered; sequence PGDAPTEPEK…TLPTTGEGSN (65 aa). A compositionally biased stretch (basic and acidic residues) spans 529–557; the sequence is AKDDAKKDDTKKEDAKKPEAKKEDAKKAE. The tract at residues 531–555 is 5 X 5 AA repeats of [DE]-D-A-K-K; it reads DDAKKDDTKKEDAKKPEAKKEDAKK. An LPXTG sorting signal motif is present at residues 559 to 563; the sequence is LPTTG. T562 carries the post-translational modification Pentaglycyl murein peptidoglycan amidated threonine. The propeptide at 563–593 is removed by sortase; it reads GEGSNPFFTAAALAVMAGAGALAVASKRKED.

It is found in the secreted. The protein resides in the cell wall. The polypeptide is Immunoglobulin G-binding protein G (spg) (Streptococcus sp. group G).